The primary structure comprises 138 residues: Holo-[acyl-carrier-protein] synthase (138 aa).

Mg(2+)-binding residues include aspartate 8 and glutamate 60.

The protein belongs to the P-Pant transferase superfamily. AcpS family. It depends on Mg(2+) as a cofactor.

The protein localises to the cytoplasm. The catalysed reaction is apo-[ACP] + CoA = holo-[ACP] + adenosine 3',5'-bisphosphate + H(+). Transfers the 4'-phosphopantetheine moiety from coenzyme A to a Ser of acyl-carrier-protein. In Magnetococcus marinus (strain ATCC BAA-1437 / JCM 17883 / MC-1), this protein is Holo-[acyl-carrier-protein] synthase.